The primary structure comprises 288 residues: 4-diphosphocytidyl-2-C-methyl-D-erythritol kinase (288 aa).

Lysine 10 is a catalytic residue. 94–104 contacts ATP; the sequence is PVAAGLGGGSS. Aspartate 136 is a catalytic residue.

Belongs to the GHMP kinase family. IspE subfamily.

The enzyme catalyses 4-CDP-2-C-methyl-D-erythritol + ATP = 4-CDP-2-C-methyl-D-erythritol 2-phosphate + ADP + H(+). It functions in the pathway isoprenoid biosynthesis; isopentenyl diphosphate biosynthesis via DXP pathway; isopentenyl diphosphate from 1-deoxy-D-xylulose 5-phosphate: step 3/6. Its function is as follows. Catalyzes the phosphorylation of the position 2 hydroxy group of 4-diphosphocytidyl-2C-methyl-D-erythritol. This chain is 4-diphosphocytidyl-2-C-methyl-D-erythritol kinase, found in Lactiplantibacillus plantarum (strain ATCC BAA-793 / NCIMB 8826 / WCFS1) (Lactobacillus plantarum).